Consider the following 421-residue polypeptide: Immunoglobulin heavy constant epsilon (421 aa).

4 Ig-like domains span residues 5–97, 99–184, 201–301, and 310–410; these read PQLY…VNIT, PTLE…KVTS, PRGV…RSIT, and PEVY…KTIS. Cys23 and Cys75 are disulfide-bonded. N-linked (GlcNAc...) asparagine glycans are attached at residues Asn43, Asn72, Asn84, Asn95, Asn166, Asn238, Asn261, Asn365, and Asn415. 3 disulfide bridges follow: Cys121-Cys180, Cys226-Cys285, and Cys330-Cys392.

As to quaternary structure, the basic structural unit consists of two identical heavy chains and two identical light chains; disulfide-linked. N-terminal variable regions of the heavy and light chains form the antigen binding sites, whereas the C-terminal constant regions of the heavy chains interact with immune receptors to mediate effector functions.

It is found in the secreted. It localises to the cell membrane. Functionally, constant region of immunoglobulin heavy chains. Immunoglobulins, also known as antibodies, are membrane-bound or secreted glycoproteins produced by B lymphocytes. In the recognition phase of humoral immunity, the membrane-bound immunoglobulins serve as receptors which, upon binding of a specific antigen, trigger the clonal expansion and differentiation of B lymphocytes into immunoglobulins-secreting plasma cells. Secreted immunoglobulins mediate the effector phase of humoral immunity, which results in the elimination of bound antigens. The antigen binding site is formed by the variable domain of one heavy chain, together with that of its associated light chain. Thus, each immunoglobulin has two antigen binding sites with remarkable affinity for a particular antigen. The variable domains are assembled by a process called V-(D)-J rearrangement and can then be subjected to somatic hypermutations which, after exposure to antigen and selection, allow affinity maturation for a particular antigen. This is Immunoglobulin heavy constant epsilon from Mus musculus (Mouse).